A 335-amino-acid polypeptide reads, in one-letter code: Phosphate acyltransferase (335 aa).

This sequence belongs to the PlsX family. As to quaternary structure, homodimer. Probably interacts with PlsY.

Its subcellular location is the cytoplasm. The catalysed reaction is a fatty acyl-[ACP] + phosphate = an acyl phosphate + holo-[ACP]. It functions in the pathway lipid metabolism; phospholipid metabolism. Functionally, catalyzes the reversible formation of acyl-phosphate (acyl-PO(4)) from acyl-[acyl-carrier-protein] (acyl-ACP). This enzyme utilizes acyl-ACP as fatty acyl donor, but not acyl-CoA. This is Phosphate acyltransferase from Streptococcus pyogenes serotype M18 (strain MGAS8232).